The sequence spans 264 residues: Elongation factor Ts (264 aa).

Residues 76–79 are involved in Mg(2+) ion dislocation from EF-Tu; sequence TDFV.

This sequence belongs to the EF-Ts family.

Its subcellular location is the cytoplasm. Functionally, associates with the EF-Tu.GDP complex and induces the exchange of GDP to GTP. It remains bound to the aminoacyl-tRNA.EF-Tu.GTP complex up to the GTP hydrolysis stage on the ribosome. This is Elongation factor Ts from Deinococcus radiodurans (strain ATCC 13939 / DSM 20539 / JCM 16871 / CCUG 27074 / LMG 4051 / NBRC 15346 / NCIMB 9279 / VKM B-1422 / R1).